Reading from the N-terminus, the 907-residue chain is Catenin alpha-1 (907 aa).

Basic and acidic residues predominate over residues 870 to 879; that stretch reads VKREKLDDGQ. The tract at residues 870–895 is disordered; that stretch reads VKREKLDDGQTNKVKRSSQKKHINPV. The span at 882 to 892 shows a compositional bias: basic residues; the sequence is KVKRSSQKKHI.

The protein belongs to the vinculin/alpha-catenin family. Interacts with ctnnb1, jupa and cdh2. Interacts with cdh1 during early stages of oogenesis, interaction is no longer present when oocyte develops into the unfertilized egg. As to expression, expressed in the skin (at protein level). Expressed in the ovary.

Its subcellular location is the cell junction. The protein resides in the adherens junction. It localises to the cytoplasm. The protein localises to the cytoskeleton. It is found in the cell membrane. Its subcellular location is the nucleus. Functionally, associates with the cytoplasmic domain of a variety of cadherins, forming catenin and cadherin complexes which are further linked to the actin filament network and is thereby involved in cell-cell adhesion. Required for embryonic development, via maintenance of adherens junctions that facilitate the maintenance of the epithelial barrier. This Danio rerio (Zebrafish) protein is Catenin alpha-1.